A 458-amino-acid polypeptide reads, in one-letter code: MAALSKSIPHNCYEIGHTWQPSCWLSFLHITRGALEESLKIYAPLYLIAAILRKRKLDYYLHKLLPEILQSASFLTANGALFMAFFCILRKILGKFYLWSPGFGAALPASYVAILVERKSRRGLLTIYMANLATETLFRMGVARGVITTLRNGEVLLFCITAAMYMFFFRCKDGLKGFTFSALRFIVGKEEIPTHSYSPEAAYAKVEQKTEKHEEKPRGMNIIALVRKLVDSVCKHGPRHRCCKHYEDNCISYCIKGFIRMFSVGYLIQCCLRIPSAFRHLFTQPSRLLSLFYNKENFQLGAFLGSFVSIYKGTSCFLRWVRNLDDELHAIIAGFLAGVSMMFYKSTTISMYLASKLVETMYFKGIEAGKVPYFPHADTIIYSISTAICFQAAVMEVQTLRPSYWKFLLRLTKGRFAVMNRKVLDVFGTGASKNFPDFTPRLDPRYTTVTPELPIEFS.

Helical transmembrane passes span 68–88 (ILQS…FFCI), 96–116 (FYLW…AILV), 149–169 (TLRN…MFFF), 298–318 (FQLG…SCFL), 331–351 (IIAG…TISM), and 380–400 (IIYS…VQTL).

Belongs to the TMEM135 family.

It is found in the mitochondrion membrane. Its subcellular location is the peroxisome membrane. Its function is as follows. Involved in mitochondrial metabolism by regulating the balance between mitochondrial fusion and fission. May act as a regulator of mitochondrial fission that promotes DNM1L-dependent fission through activation of DNM1L. May be involved in peroxisome organization. In Bos taurus (Bovine), this protein is Transmembrane protein 135.